The following is a 204-amino-acid chain: Cytochrome c biogenesis ATP-binding export protein CcmA (204 aa).

One can recognise an ABC transporter domain in the interval 3–204 (LTVTDLAIAR…PLDDPDGDFL (202 aa)). ATP is bound at residue 35-42 (GPNGAGKT).

This sequence belongs to the ABC transporter superfamily. CcmA exporter (TC 3.A.1.107) family. In terms of assembly, the complex is composed of two ATP-binding proteins (CcmA) and two transmembrane proteins (CcmB).

It is found in the cell membrane. It catalyses the reaction heme b(in) + ATP + H2O = heme b(out) + ADP + phosphate + H(+). In terms of biological role, part of the ABC transporter complex CcmAB involved in the biogenesis of c-type cytochromes; once thought to export heme, this seems not to be the case, but its exact role is uncertain. Responsible for energy coupling to the transport system. The chain is Cytochrome c biogenesis ATP-binding export protein CcmA from Ruegeria pomeroyi (strain ATCC 700808 / DSM 15171 / DSS-3) (Silicibacter pomeroyi).